A 475-amino-acid polypeptide reads, in one-letter code: MSPQTETKASVGFKAGVKDYKLTYYTPEYETKDTDILAAFRVTPQPGVPPEEAGAAVAAESSTGTWTTVWTDGLTSLDRYKGRCYHIEPVAGEENQYICYVAYPLDLFEEGSVTNMFTSIVGNVFGFKALRALRLEDLRIPTAYVKTFQGPPHGIQVERDKLNKYGRPLLGCTIKPKLGLSAKNYGRAVYECLRGGLDFTKDDENVNSQPFMRWRDRFLFCAEAIYKSQAETGEIKGHYLNATAGTCEEMMKRAIFARELGVPIVMHDYLTGGFTANTSLAHYCRDNGLLLHIHRAMHAVIDRQKNHGIHFRVLAKALRMSGGDHIHSGTVVGKLEGERDITLGFVDLLRDDFIEKDRSRGIYFTQDWVSLPGVLPVASGGIHVWHMPALTEIFGDDSVLQFGGGTLGHPWGNAPGAVANRVALEACVQARNEGRDLAREGNEIIREACKWSPELAAACEVWKEIKFEFQAMDTL.

Positions 1–2 (MS) are excised as a propeptide. Residue P3 is modified to N-acetylproline. K14 is modified (N6,N6,N6-trimethyllysine). Positions 123 and 173 each coordinate substrate. K175 acts as the Proton acceptor in catalysis. Residue K177 coordinates substrate. Mg(2+) is bound by residues K201, D203, and E204. An N6-carboxylysine modification is found at K201. H294 acts as the Proton acceptor in catalysis. The substrate site is built by R295, H327, and S379.

The protein belongs to the RuBisCO large chain family. Type I subfamily. Heterohexadecamer of 8 large chains and 8 small chains; disulfide-linked. The disulfide link is formed within the large subunit homodimers. Mg(2+) serves as cofactor. The disulfide bond which can form in the large chain dimeric partners within the hexadecamer appears to be associated with oxidative stress and protein turnover.

The protein resides in the plastid. It is found in the chloroplast. The enzyme catalyses 2 (2R)-3-phosphoglycerate + 2 H(+) = D-ribulose 1,5-bisphosphate + CO2 + H2O. It catalyses the reaction D-ribulose 1,5-bisphosphate + O2 = 2-phosphoglycolate + (2R)-3-phosphoglycerate + 2 H(+). In terms of biological role, ruBisCO catalyzes two reactions: the carboxylation of D-ribulose 1,5-bisphosphate, the primary event in carbon dioxide fixation, as well as the oxidative fragmentation of the pentose substrate in the photorespiration process. Both reactions occur simultaneously and in competition at the same active site. The chain is Ribulose bisphosphate carboxylase large chain from Oenothera argillicola (Appalachian evening primrose).